Consider the following 556-residue polypeptide: tRNA (guanine(37)-N(1))-methyltransferase (556 aa).

Residues 1–30 (MIITTKALTVLPHSGLRTTHRSLLARLRHY) constitute a mitochondrion transit peptide. S-adenosyl-L-methionine-binding positions include His249, 287–288 (DL), 315–316 (DA), and Asn346. 2 disordered regions span residues 444–465 (QHEE…KMKD) and 524–556 (KKAA…EMQM). 2 stretches are compositionally biased toward basic and acidic residues: residues 454–465 (EEAKRPSNKMKD) and 540–549 (SKPDTKKIEA).

Belongs to the class I-like SAM-binding methyltransferase superfamily. TRM5/TYW2 family. In terms of assembly, monomer.

Its subcellular location is the mitochondrion matrix. It localises to the nucleus. It is found in the cytoplasm. The enzyme catalyses guanosine(37) in tRNA + S-adenosyl-L-methionine = N(1)-methylguanosine(37) in tRNA + S-adenosyl-L-homocysteine + H(+). Functionally, specifically methylates the N1 position of guanosine-37 in various cytoplasmic and mitochondrial tRNAs. Methylation is not dependent on the nature of the nucleoside 5' of the target nucleoside. This is the first step in the biosynthesis of wybutosine (yW), a modified base adjacent to the anticodon of tRNAs and required for accurate decoding. This Anopheles gambiae (African malaria mosquito) protein is tRNA (guanine(37)-N(1))-methyltransferase.